Reading from the N-terminus, the 446-residue chain is Eukaryotic translation initiation factor 3 subunit E (446 aa).

Positions 256-425 (TDLFFSPAYI…GTVIMNHPPQ (170 aa)) constitute a PCI domain.

This sequence belongs to the eIF-3 subunit E family. As to quaternary structure, component of the eukaryotic translation initiation factor 3 (eIF-3) complex.

The protein resides in the cytoplasm. In terms of biological role, component of the eukaryotic translation initiation factor 3 (eIF-3) complex, which is involved in protein synthesis of a specialized repertoire of mRNAs and, together with other initiation factors, stimulates binding of mRNA and methionyl-tRNAi to the 40S ribosome. The eIF-3 complex specifically targets and initiates translation of a subset of mRNAs involved in cell proliferation. This Aspergillus terreus (strain NIH 2624 / FGSC A1156) protein is Eukaryotic translation initiation factor 3 subunit E (int6).